The following is a 164-amino-acid chain: Putative pre-16S rRNA nuclease (164 aa).

It belongs to the YqgF nuclease family.

The protein localises to the cytoplasm. Its function is as follows. Could be a nuclease involved in processing of the 5'-end of pre-16S rRNA. The protein is Putative pre-16S rRNA nuclease of Rhizobium rhizogenes (strain K84 / ATCC BAA-868) (Agrobacterium radiobacter).